We begin with the raw amino-acid sequence, 637 residues long: MIAIQLPDGSRREFDGPVTVAEVAASIGAGLAKAALAGRIGTGDAARLVDTSHRIEADEALSIITAKDAAGLDVIRHSTAHLLAYAVKELFPDAQVTIGPTIENGFFYDFSYKRPFTPDDLAAIEKKMGDLAAKDEPVVRSVMPRDEAVSYFKSIGEAYKAEIIESIPADQAVSLYAEGKFTDLCRGPHVPSTGKLKFFKLMKVAGAYWRGDHRNEMLQRIYGTAWATKDDLQKYLVMLEEAEKRDHRKLGRELDLFHIDEHAPGVVFWHPKGWTVWQQVEQYMRRVYRDNGYQEVKGPQILDKGLWEKTGHWDKYRDNMFTTESEKRDYALKPMNCPGHILIFKQGIKSYRDLPLRYGEFGQCHRNEPSGGLHGIMRVRGFTQDDGHIFCTEDQILPECDAFTTLLQKVYADFGFTEILYKVATRPEKRIGSDELWDKAEAALIASLRNSGCEFEISPGEGAFYGPKVEYTLKDALGRHWQCGTIQVDFSLPERLDAEYVAESGERLHPVMLHRAILGSLERFIGILIEEHAGALPFWLAPTQVSVLNITDGQADYARDVARSLQKQGLRVALDLRNEKITYKIREHSLQKVPYLIVVGDKERASGAVAVRARGNQDLGVMALEAFSQKLAAELAT.

A TGS domain is found at 1 to 65; that stretch reads MIAIQLPDGS…EADEALSIIT (65 aa). Residues 246–537 form a catalytic region; that stretch reads DHRKLGRELD…LIEEHAGALP (292 aa). C337, H388, and H514 together coordinate Zn(2+).

It belongs to the class-II aminoacyl-tRNA synthetase family. Homodimer. Zn(2+) is required as a cofactor.

The protein resides in the cytoplasm. It catalyses the reaction tRNA(Thr) + L-threonine + ATP = L-threonyl-tRNA(Thr) + AMP + diphosphate + H(+). Its function is as follows. Catalyzes the attachment of threonine to tRNA(Thr) in a two-step reaction: L-threonine is first activated by ATP to form Thr-AMP and then transferred to the acceptor end of tRNA(Thr). Also edits incorrectly charged L-seryl-tRNA(Thr). In Leptothrix cholodnii (strain ATCC 51168 / LMG 8142 / SP-6) (Leptothrix discophora (strain SP-6)), this protein is Threonine--tRNA ligase.